We begin with the raw amino-acid sequence, 93 residues long: Small ribosomal subunit protein uS19c (93 aa).

Belongs to the universal ribosomal protein uS19 family.

It localises to the plastid. The protein localises to the chloroplast. Its function is as follows. Protein S19 forms a complex with S13 that binds strongly to the 16S ribosomal RNA. The chain is Small ribosomal subunit protein uS19c (rps19-A) from Zea mays (Maize).